Here is an 83-residue protein sequence, read N- to C-terminus: Small ribosomal subunit protein uS17 (83 aa).

The protein belongs to the universal ribosomal protein uS17 family. In terms of assembly, part of the 30S ribosomal subunit.

Functionally, one of the primary rRNA binding proteins, it binds specifically to the 5'-end of 16S ribosomal RNA. The sequence is that of Small ribosomal subunit protein uS17 from Ehrlichia chaffeensis (strain ATCC CRL-10679 / Arkansas).